The chain runs to 432 residues: Enolase (432 aa).

Glutamine 163 contacts (2R)-2-phosphoglycerate. The active-site Proton donor is glutamate 205. 3 residues coordinate Mg(2+): aspartate 242, glutamate 287, and aspartate 314. 4 residues coordinate (2R)-2-phosphoglycerate: lysine 339, arginine 368, serine 369, and lysine 390. The Proton acceptor role is filled by lysine 339.

It belongs to the enolase family. The cofactor is Mg(2+).

It localises to the cytoplasm. The protein resides in the secreted. It is found in the cell surface. It carries out the reaction (2R)-2-phosphoglycerate = phosphoenolpyruvate + H2O. The protein operates within carbohydrate degradation; glycolysis; pyruvate from D-glyceraldehyde 3-phosphate: step 4/5. Catalyzes the reversible conversion of 2-phosphoglycerate (2-PG) into phosphoenolpyruvate (PEP). It is essential for the degradation of carbohydrates via glycolysis. The sequence is that of Enolase from Myxococcus xanthus (strain DK1622).